We begin with the raw amino-acid sequence, 77 residues long: Protein AC145 (77 aa).

Its subcellular location is the host nucleus. The protein resides in the virion. Functionally, plays a role in primary oral infection of the host. The chain is Protein AC145 from Autographa californica nuclear polyhedrosis virus (AcMNPV).